A 410-amino-acid chain; its full sequence is Multidrug resistance protein MdtA (410 aa).

The signal sequence occupies residues 1–21; that stretch reads MNNRYPVMKKGLIVLVVIAVA. The segment at 36 to 56 is disordered; that stretch reads SDGDLSGQSAHGKRGNGAHKP.

This sequence belongs to the membrane fusion protein (MFP) (TC 8.A.1) family. In terms of assembly, part of a tripartite efflux system composed of MdtA, MdtB and MdtC.

It localises to the cell inner membrane. The protein is Multidrug resistance protein MdtA of Pantoea ananatis (strain AJ13355).